Reading from the N-terminus, the 446-residue chain is Gamma-glutamyl phosphate reductase (446 aa).

The protein belongs to the gamma-glutamyl phosphate reductase family.

It is found in the cytoplasm. The enzyme catalyses L-glutamate 5-semialdehyde + phosphate + NADP(+) = L-glutamyl 5-phosphate + NADPH + H(+). The protein operates within amino-acid biosynthesis; L-proline biosynthesis; L-glutamate 5-semialdehyde from L-glutamate: step 2/2. Functionally, catalyzes the NADPH-dependent reduction of L-glutamate 5-phosphate into L-glutamate 5-semialdehyde and phosphate. The product spontaneously undergoes cyclization to form 1-pyrroline-5-carboxylate. This is Gamma-glutamyl phosphate reductase from Sulfurihydrogenibium sp. (strain YO3AOP1).